A 166-amino-acid polypeptide reads, in one-letter code: NAD(P)H-quinone oxidoreductase subunit I, chloroplastic (166 aa).

4Fe-4S ferredoxin-type domains lie at 55–84 and 95–124; these read GRIHFEFDKCIACEVCVRVCPIDLPVVDWK and LNYSIDFGICIFCGNCVEYCPTNCLSMTEE. C64, C67, C70, C74, C104, C107, C110, and C114 together coordinate [4Fe-4S] cluster.

This sequence belongs to the complex I 23 kDa subunit family. As to quaternary structure, NDH is composed of at least 16 different subunits, 5 of which are encoded in the nucleus. [4Fe-4S] cluster serves as cofactor.

The protein resides in the plastid. Its subcellular location is the chloroplast thylakoid membrane. The catalysed reaction is a plastoquinone + NADH + (n+1) H(+)(in) = a plastoquinol + NAD(+) + n H(+)(out). It catalyses the reaction a plastoquinone + NADPH + (n+1) H(+)(in) = a plastoquinol + NADP(+) + n H(+)(out). In terms of biological role, NDH shuttles electrons from NAD(P)H:plastoquinone, via FMN and iron-sulfur (Fe-S) centers, to quinones in the photosynthetic chain and possibly in a chloroplast respiratory chain. The immediate electron acceptor for the enzyme in this species is believed to be plastoquinone. Couples the redox reaction to proton translocation, and thus conserves the redox energy in a proton gradient. The chain is NAD(P)H-quinone oxidoreductase subunit I, chloroplastic from Espeletia timotensis (Andean giant rosette).